The following is a 229-amino-acid chain: PKHD-type hydroxylase BBta_3541 (229 aa).

Residues 78–180 (QIFPPLFNRY…RVASFFWMQS (103 aa)) form the Fe2OG dioxygenase domain. Fe cation is bound by residues His98, Asp100, and His161. Residue Arg171 participates in 2-oxoglutarate binding.

The cofactor is Fe(2+). It depends on L-ascorbate as a cofactor.

The chain is PKHD-type hydroxylase BBta_3541 from Bradyrhizobium sp. (strain BTAi1 / ATCC BAA-1182).